The following is a 122-amino-acid chain: Large ribosomal subunit protein eL31 (122 aa).

This sequence belongs to the eukaryotic ribosomal protein eL31 family.

The polypeptide is Large ribosomal subunit protein eL31 (Caenorhabditis elegans).